A 169-amino-acid chain; its full sequence is Cell division inhibitor SulA (169 aa).

Polar residues predominate over residues 1 to 13 (MFTSAHANRSAQA). The interval 1–26 (MFTSAHANRSAQASAPAGHYAHRSGE) is disordered. The ftsZ binding stretch occupies residues 106-112 (ALRTGNY). The interval 162-169 (KIHSNLYH) is lon protease binding.

It belongs to the SulA family. In terms of assembly, interacts with FtsZ. In terms of processing, is rapidly cleaved and degraded by the Lon protease once DNA damage is repaired.

Functionally, component of the SOS system and an inhibitor of cell division. Accumulation of SulA causes rapid cessation of cell division and the appearance of long, non-septate filaments. In the presence of GTP, binds a polymerization-competent form of FtsZ in a 1:1 ratio, thus inhibiting FtsZ polymerization and therefore preventing it from participating in the assembly of the Z ring. This mechanism prevents the premature segregation of damaged DNA to daughter cells during cell division. The sequence is that of Cell division inhibitor SulA from Klebsiella pneumoniae subsp. pneumoniae (strain ATCC 700721 / MGH 78578).